A 354-amino-acid chain; its full sequence is S-adenosylmethionine:tRNA ribosyltransferase-isomerase (354 aa).

Belongs to the QueA family. Monomer.

It localises to the cytoplasm. The enzyme catalyses 7-aminomethyl-7-carbaguanosine(34) in tRNA + S-adenosyl-L-methionine = epoxyqueuosine(34) in tRNA + adenine + L-methionine + 2 H(+). It functions in the pathway tRNA modification; tRNA-queuosine biosynthesis. Functionally, transfers and isomerizes the ribose moiety from AdoMet to the 7-aminomethyl group of 7-deazaguanine (preQ1-tRNA) to give epoxyqueuosine (oQ-tRNA). The sequence is that of S-adenosylmethionine:tRNA ribosyltransferase-isomerase from Salmonella paratyphi A (strain ATCC 9150 / SARB42).